A 316-amino-acid polypeptide reads, in one-letter code: Very-long-chain 3-oxooacyl-coA reductase let-767 (316 aa).

Residues 47 to 76 (ASWAVVTGATDGIGKAYAFELARRGFNVLL) and aspartate 106 each bind NADP(+). Residue serine 189 participates in substrate binding. The active-site Proton acceptor is tyrosine 202. An NADP(+)-binding site is contributed by lysine 206.

This sequence belongs to the short-chain dehydrogenases/reductases (SDR) family. 17-beta-HSD 3 subfamily. Expressed in the gut of larva and adult.

The enzyme catalyses a very-long-chain (3R)-3-hydroxyacyl-CoA + NADP(+) = a very-long-chain 3-oxoacyl-CoA + NADPH + H(+). It catalyses the reaction (omega-1)-methyl-(3R)-hydroxy-fatty acyl-CoA + NADP(+) = (omega-1)-methyl-3-oxo-fatty acyl-CoA + NADPH + H(+). The catalysed reaction is a 17beta-hydroxy steroid + NADP(+) = a 17-oxo steroid + NADPH + H(+). It participates in lipid metabolism; fatty acid biosynthesis. Functionally, required for branched-chain fatty acid synthesis (such as (omega-1)-methyl-fatty acids). Catalyzes the reduction of the 3-keto-fatty acyl-CoA intermediate that is formed in each cycle of fatty acid elongation. Very long-chain fatty acids (VLCFAs) serve as precursors for ceramide and sphingolipids. Involved in hormone production as it metabolizes 4-androstendione (androst-4-ene-3,17-dione) into testosterone and estrone into estradiol (17beta-estradiol) in vitro, but the physiological steroid substrate is unknown. The polypeptide is Very-long-chain 3-oxooacyl-coA reductase let-767 (let-767) (Caenorhabditis elegans).